We begin with the raw amino-acid sequence, 228 residues long: Ribulose-phosphate 3-epimerase (228 aa).

S9 contributes to the substrate binding site. Residues H34, D36, H68, and D177 each contribute to the a divalent metal cation site. The active-site Proton acceptor is D36. Substrate is bound by residues H68, 177 to 179 (DGG), and 199 to 200 (GS). Residue D177 is the Proton donor of the active site.

This sequence belongs to the ribulose-phosphate 3-epimerase family. It depends on a divalent metal cation as a cofactor.

It catalyses the reaction D-ribulose 5-phosphate = D-xylulose 5-phosphate. Its pathway is carbohydrate degradation. In terms of biological role, catalyzes the reversible epimerization of D-ribulose 5-phosphate to D-xylulose 5-phosphate. This Buchnera aphidicola subsp. Acyrthosiphon pisum (strain APS) (Acyrthosiphon pisum symbiotic bacterium) protein is Ribulose-phosphate 3-epimerase.